The chain runs to 23 residues: Caerin-4.3 (23 aa).

In terms of tissue distribution, expressed by the skin parotoid and/or rostral glands.

The protein resides in the secreted. In terms of biological role, antibacterial peptide, that adopts an alpha helical conformation which can disrupt bacterial membranes. Each caerin displays a different antimicrobial specificity. The protein is Caerin-4.3 of Ranoidea caerulea (Green tree frog).